The primary structure comprises 98 residues: Small ribosomal subunit protein uS19 (98 aa).

It belongs to the universal ribosomal protein uS19 family.

Protein S19 forms a complex with S13 that binds strongly to the 16S ribosomal RNA. The chain is Small ribosomal subunit protein uS19 from Chlorobaculum parvum (strain DSM 263 / NCIMB 8327) (Chlorobium vibrioforme subsp. thiosulfatophilum).